The chain runs to 544 residues: CTP synthase (544 aa).

The segment at 1–266 (MKYIFVTGGV…GKAVEELLGL (266 aa)) is amidoligase domain. Ser-12 provides a ligand contact to CTP. Ser-12 lines the UTP pocket. Residue 13-18 (SLGKGV) participates in ATP binding. Tyr-53 serves as a coordination point for L-glutamine. Asp-70 contributes to the ATP binding site. Residues Asp-70 and Glu-140 each coordinate Mg(2+). CTP is bound by residues 147-149 (DIE), 187-192 (KTKPTQ), and Lys-223. Residues 187–192 (KTKPTQ) and Lys-223 contribute to the UTP site. In terms of domain architecture, Glutamine amidotransferase type-1 spans 291–544 (TIAIAGKYTA…VKAALEHQQQ (254 aa)). Gly-356 is a binding site for L-glutamine. Cys-383 (nucleophile; for glutamine hydrolysis) is an active-site residue. Residues 384–387 (LGMQ), Glu-407, and Arg-467 each bind L-glutamine. Residues His-517 and Glu-519 contribute to the active site.

This sequence belongs to the CTP synthase family. Homotetramer.

It carries out the reaction UTP + L-glutamine + ATP + H2O = CTP + L-glutamate + ADP + phosphate + 2 H(+). It catalyses the reaction L-glutamine + H2O = L-glutamate + NH4(+). The enzyme catalyses UTP + NH4(+) + ATP = CTP + ADP + phosphate + 2 H(+). It participates in pyrimidine metabolism; CTP biosynthesis via de novo pathway; CTP from UDP: step 2/2. With respect to regulation, allosterically activated by GTP, when glutamine is the substrate; GTP has no effect on the reaction when ammonia is the substrate. The allosteric effector GTP functions by stabilizing the protein conformation that binds the tetrahedral intermediate(s) formed during glutamine hydrolysis. Inhibited by the product CTP, via allosteric rather than competitive inhibition. In terms of biological role, catalyzes the ATP-dependent amination of UTP to CTP with either L-glutamine or ammonia as the source of nitrogen. Regulates intracellular CTP levels through interactions with the four ribonucleotide triphosphates. This Deinococcus radiodurans (strain ATCC 13939 / DSM 20539 / JCM 16871 / CCUG 27074 / LMG 4051 / NBRC 15346 / NCIMB 9279 / VKM B-1422 / R1) protein is CTP synthase.